The sequence spans 476 residues: MDFEAVIGLEVHAELSTNTKIYCGCTTEFGGQPNTHVCPICLGLPGSLPQLNKRVVEYGIKAGLALNCSINKVCRMDRKNYFYPDCPKNYQITQDEVPICRDGYIEIELENGEKKKIGIERIHMEEDAGKLLHTNAGTLVDYNRAGVPLIEIVSRPDIRTPEEATKYLEKLKSILSSIEVSDCKMEQGSLRCDGNISVMPKGSEKFGVRSEIKNMNSFKALEKALSYEYDRHVEAVTKGEILEQETRRWDEANSVTVLMRSKEKANDYRYFPEGDLVTLNISDEWIEEVRKTIPELPHEKAERFVNEFGIPKYDAMVLTLTMDMAKFFEETALKSEDAKAASNWLMGDISRLMNEKAIEVKDLKFNPEQLAQLIKLINAGTISNNIGKKVLDDMFKSGKNPKDIVEEKGLVQNNDEGAILEVVKNIIENNPQSIEDFKNGKKRALGFLVGLVMKETKGKANPQIVNKLVSEEANKM.

The protein belongs to the GatB/GatE family. GatB subfamily. Heterotrimer of A, B and C subunits.

It catalyses the reaction L-glutamyl-tRNA(Gln) + L-glutamine + ATP + H2O = L-glutaminyl-tRNA(Gln) + L-glutamate + ADP + phosphate + H(+). The catalysed reaction is L-aspartyl-tRNA(Asn) + L-glutamine + ATP + H2O = L-asparaginyl-tRNA(Asn) + L-glutamate + ADP + phosphate + 2 H(+). Functionally, allows the formation of correctly charged Asn-tRNA(Asn) or Gln-tRNA(Gln) through the transamidation of misacylated Asp-tRNA(Asn) or Glu-tRNA(Gln) in organisms which lack either or both of asparaginyl-tRNA or glutaminyl-tRNA synthetases. The reaction takes place in the presence of glutamine and ATP through an activated phospho-Asp-tRNA(Asn) or phospho-Glu-tRNA(Gln). The chain is Aspartyl/glutamyl-tRNA(Asn/Gln) amidotransferase subunit B from Clostridium botulinum (strain ATCC 19397 / Type A).